Here is a 115-residue protein sequence, read N- to C-terminus: Large ribosomal subunit protein P2 (115 aa).

Methionine 1 bears the N-acetylmethionine mark. A phosphoserine mark is found at serine 17 and serine 19. Lysine 21 carries the post-translational modification N6-acetyllysine; alternate. Lysine 21 bears the N6-succinyllysine; alternate mark. The segment covering 76 to 90 has biased composition (low complexity); that stretch reads APGSAAPAAGSAPAA. The segment at 76–115 is disordered; the sequence is APGSAAPAAGSAPAAAEEKKEEKKEESEESDDDMGFGLFD. Residues serine 79 and serine 86 each carry the phosphoserine modification. Positions 91–101 are enriched in basic and acidic residues; the sequence is AEEKKEEKKEE. Serine 102 and serine 105 each carry phosphoserine.

Belongs to the eukaryotic ribosomal protein P1/P2 family. As to quaternary structure, heterodimer with RPLP1 at the lateral ribosomal stalk of the large ribosomal subunit.

In terms of biological role, plays an important role in the elongation step of protein synthesis. This Bos taurus (Bovine) protein is Large ribosomal subunit protein P2 (RPLP2).